We begin with the raw amino-acid sequence, 135 residues long: Protein PsiE homolog (135 aa).

The next 4 membrane-spanning stretches (helical) occupy residues 20–40 (VGLIMLAAILVVFLVKETIHL), 54–74 (YMLIEGIVIYFLYFEFIALIV), 82–102 (HFPLRYFIYIGITAIIRLIIV), and 107–127 (PIDTLIYSGSILVLVVTLYLA).

This sequence belongs to the PsiE family.

It is found in the cell inner membrane. The chain is Protein PsiE homolog from Yersinia pseudotuberculosis serotype IB (strain PB1/+).